The following is a 1706-amino-acid chain: PR domain zinc finger protein 2 (1706 aa).

Positions Glu-27–Asn-140 constitute an SET domain. Positions Glu-154–Arg-342 are disordered. The segment covering Ala-158 to Arg-183 has biased composition (basic residues). Polar residues predominate over residues His-185–Ala-199. Positions Thr-258–Met-294 are enriched in acidic residues. Residues Ser-299–Asp-313 are compositionally biased toward basic and acidic residues. 2 consecutive C2H2-type zinc fingers follow at residues Phe-355–His-377 and Phe-385–His-407. Disordered regions lie at residues Arg-400–Gln-446, Arg-492–Gly-542, and Leu-618–Pro-655. At Ser-416 the chain carries Phosphoserine. Positions Asp-427 to Ser-439 are enriched in basic and acidic residues. The C2H2-type 3 zinc-finger motif lies at His-476–His-499. Ser-637 bears the Phosphoserine mark. Residues Lys-645, Lys-684, and Lys-686 each participate in a glycyl lysine isopeptide (Lys-Gly) (interchain with G-Cter in SUMO2) cross-link. 3 disordered regions span residues Thr-724–Cys-794, Ser-823–Val-1075, and Val-1088–Gln-1112. A compositionally biased stretch (low complexity) spans Ser-733–Pro-743. At Ser-738 the chain carries Phosphoserine. Residue Lys-769 forms a Glycyl lysine isopeptide (Lys-Gly) (interchain with G-Cter in SUMO2) linkage. Phosphoserine occurs at positions 776, 780, and 791. A compositionally biased stretch (polar residues) spans Ser-823–Thr-832. Residues Ser-846–His-863 are compositionally biased toward basic and acidic residues. Glycyl lysine isopeptide (Lys-Gly) (interchain with G-Cter in SUMO2) cross-links involve residues Lys-860 and Lys-870. Polar residues-rich tracts occupy residues Ser-891–Thr-912 and Leu-943–Gln-952. Positions Pro-962–Pro-983 are enriched in pro residues. The span at Asp-993–Gln-1009 shows a compositional bias: polar residues. Residues Ser-1010 to Val-1019 are compositionally biased toward low complexity. The segment covering Ser-1020–Glu-1030 has biased composition (pro residues). The segment covering Ser-1034–Ser-1062 has biased composition (low complexity). Residues Lys-1091 to Ala-1106 are compositionally biased toward basic and acidic residues. 3 C2H2-type zinc fingers span residues Phe-1123–His-1145, Phe-1151–His-1174, and Phe-1180–His-1203. Residues Lys-1136 and Lys-1140 each participate in a glycyl lysine isopeptide (Lys-Gly) (interchain with G-Cter in SUMO2) cross-link. Polar residues predominate over residues Leu-1218–Ser-1227. Residues Leu-1218–Asn-1251 are disordered. Lys-1269 is covalently cross-linked (Glycyl lysine isopeptide (Lys-Gly) (interchain with G-Cter in SUMO2)). The C2H2-type 7; atypical zinc-finger motif lies at Ile-1321–Cys-1343. Residues His-1443–Ser-1465 form a C2H2-type 8; atypical zinc finger. A disordered region spans residues Cys-1466–Asn-1563. The span at Ser-1474–Gly-1486 shows a compositional bias: basic residues. Over residues His-1487–Ser-1498 the composition is skewed to low complexity. Positions Gly-1528 to Asn-1544 are enriched in polar residues. Residues Ala-1548–Asn-1563 are compositionally biased toward low complexity.

The protein belongs to the class V-like SAM-binding methyltransferase superfamily. Binds to the retinoblastoma protein (RB). Interacts with GATA3.

It localises to the nucleus. The enzyme catalyses L-lysyl-[histone] + S-adenosyl-L-methionine = N(6)-methyl-L-lysyl-[histone] + S-adenosyl-L-homocysteine + H(+). The catalysed reaction is L-lysyl(9)-[histone H3] + 3 S-adenosyl-L-methionine = N(6),N(6),N(6)-trimethyl-L-lysyl(9)-[histone H3] + 3 S-adenosyl-L-homocysteine + 3 H(+). S-adenosyl-L-methionine-dependent histone methyltransferase that specifically methylates 'Lys-9' of histone H3. May function as a DNA-binding transcription factor. Binds to the macrophage-specific TPA-responsive element (MTE) of the HMOX1 (heme oxygenase 1) gene and may act as a transcriptional activator of this gene. This is PR domain zinc finger protein 2 (Prdm2) from Rattus norvegicus (Rat).